The following is a 261-amino-acid chain: Triosephosphate isomerase (261 aa).

10-12 contributes to the substrate binding site; it reads NWK. H100 acts as the Electrophile in catalysis. The Proton acceptor role is filled by E172. Residues G178, S218, and 239–240 each bind substrate; that span reads GG.

The protein belongs to the triosephosphate isomerase family. Homodimer.

It localises to the cytoplasm. The enzyme catalyses D-glyceraldehyde 3-phosphate = dihydroxyacetone phosphate. The protein operates within carbohydrate biosynthesis; gluconeogenesis. Its pathway is carbohydrate degradation; glycolysis; D-glyceraldehyde 3-phosphate from glycerone phosphate: step 1/1. In terms of biological role, involved in the gluconeogenesis. Catalyzes stereospecifically the conversion of dihydroxyacetone phosphate (DHAP) to D-glyceraldehyde-3-phosphate (G3P). This Nocardia farcinica (strain IFM 10152) protein is Triosephosphate isomerase.